The sequence spans 140 residues: Endoribonuclease YbeY (140 aa).

Residues H100, H104, and H110 each contribute to the Zn(2+) site.

The protein belongs to the endoribonuclease YbeY family. Requires Zn(2+) as cofactor.

It is found in the cytoplasm. In terms of biological role, single strand-specific metallo-endoribonuclease involved in late-stage 70S ribosome quality control and in maturation of the 3' terminus of the 16S rRNA. In Helicobacter pylori (strain ATCC 700392 / 26695) (Campylobacter pylori), this protein is Endoribonuclease YbeY.